Here is a 522-residue protein sequence, read N- to C-terminus: Maturase K (522 aa).

This sequence belongs to the intron maturase 2 family. MatK subfamily.

It is found in the plastid. The protein localises to the chloroplast. Its function is as follows. Usually encoded in the trnK tRNA gene intron. Probably assists in splicing its own and other chloroplast group II introns. This Tigridia pavonia (Mexican shell flower) protein is Maturase K.